Here is a 136-residue protein sequence, read N- to C-terminus: Signal recognition particle 14 kDa protein (136 aa).

Residue Y27 is modified to Phosphotyrosine. Residues 116 to 136 (APAAAATAPTTAATTAATAAQ) form a disordered region.

It belongs to the SRP14 family. In terms of assembly, heterodimer with SRP9; binds RNA as heterodimer. Component of a signal recognition particle (SRP) complex that consists of a 7SL RNA molecule of 300 nucleotides and six protein subunits: SRP72, SRP68, SRP54, SRP19, SRP14 and SRP9.

It localises to the cytoplasm. Its function is as follows. Component of the signal recognition particle (SRP) complex, a ribonucleoprotein complex that mediates the cotranslational targeting of secretory and membrane proteins to the endoplasmic reticulum (ER). SRP9 together with SRP14 and the Alu portion of the SRP RNA, constitutes the elongation arrest domain of SRP. The complex of SRP9 and SRP14 is required for SRP RNA binding. The polypeptide is Signal recognition particle 14 kDa protein (SRP14) (Homo sapiens (Human)).